Reading from the N-terminus, the 111-residue chain is Ghrelin (111 aa).

The N-terminal stretch at 1 to 26 (MRQMKRTAYIILLVCVLALWMDSVQA) is a signal peptide. Over residues 28-37 (SSFLSPSQRP) the composition is skewed to polar residues. The disordered stretch occupies residues 28-53 (SSFLSPSQRPQGKDKKPPRVGRRDSD). Ser29 carries the O-decanoyl serine; alternate lipid modification. Ser29 carries O-hexanoyl serine; alternate lipidation. Residue Ser29 is the site of O-octanoyl serine; alternate attachment. Basic and acidic residues predominate over residues 38–53 (QGKDKKPPRVGRRDSD). A Valine amide modification is found at Val47. Residues 51–111 (DSDGILDLFM…DLLMDTPAKE (61 aa)) constitute a propeptide, removed in mature form.

The protein belongs to the motilin family. O-octanoylated by GOAT/MBOAT4. O-octanoylation or O-decanoylation is essential for activity. The O-decanoylated form ghrelin-21-C10 differs in the length of the carbon backbone of the carboxylic acid forming an ester bond with Ser-29. 44% of eel ghrelin is O-decanoylated. As to expression, highest levels in stomach and anterior intestine. Lower levels in posterior intestine, kidney and brain. Low levels in heart, head kidney and middle intestine.

It is found in the secreted. Functionally, ligand for growth hormone secretagogue receptor type 1 (GHSR). Induces the release of growth hormone from the pituitary. Has an appetite-stimulating effect, induces adiposity and stimulates gastric acid secretion. Involved in growth regulation. This Anguilla japonica (Japanese eel) protein is Ghrelin (ghrl).